The following is a 349-amino-acid chain: DNA-directed RNA polymerase subunit alpha (349 aa).

The interval Met1–Asn226 is alpha N-terminal domain (alpha-NTD). Residues Ala241–Tyr349 are alpha C-terminal domain (alpha-CTD). The interval Lys309–Tyr349 is disordered. Residues Pro336–Tyr349 show a composition bias toward acidic residues.

Belongs to the RNA polymerase alpha chain family. As to quaternary structure, homodimer. The RNAP catalytic core consists of 2 alpha, 1 beta, 1 beta' and 1 omega subunit. When a sigma factor is associated with the core the holoenzyme is formed, which can initiate transcription.

It carries out the reaction RNA(n) + a ribonucleoside 5'-triphosphate = RNA(n+1) + diphosphate. DNA-dependent RNA polymerase catalyzes the transcription of DNA into RNA using the four ribonucleoside triphosphates as substrates. The protein is DNA-directed RNA polymerase subunit alpha of Frankia casuarinae (strain DSM 45818 / CECT 9043 / HFP020203 / CcI3).